Here is a 411-residue protein sequence, read N- to C-terminus: MSSTPVTLKAVQSEVSARNAKSSEAEVKRCEDLILSYAKQLAKEKDITGIRTLVKSIQNFYDLVGKARASKLIRDIVEFALTVEQGKQEKEEKIDLLKNCIEWATSNKREFLRRSLQARLVRLYNDVREFTEGQKLGQELSKELKKLEDRELLIEVSIEESKCAFNLNNLSKAKTALLTAKTSSNSAFASPQLQAAVDMQSGVLYSAEERDYKTSFSYFYEAFEGYGSIGDKVNATGALKYMILCKIMLNETEQIPAMLSTKEVLPYNTSPRIVAIRAMADAFRKRSLKDFMKALEEHKKELVEDKVVAVHSQNLERTMLEKEISRVIEPYSEIELSYIARVIGMTVPPTEKAIARMILDKKLMGSIDQHGDTVVIYPKAGATKQFTRALTTIRELTKTVDVSYSRTKVIK.

Residues 212–381 (YKTSFSYFYE…DTVVIYPKAG (170 aa)) enclose the PCI domain.

Belongs to the proteasome subunit S9 family. In terms of assembly, component of the lid subcomplex of the 19S proteasome regulatory particle complex (also named PA700 complex). The 26S proteasome consists of a 20S proteasome core and two 19S regulatory subunits.

In terms of biological role, component of the lid subcomplex of the 26S proteasome, a multiprotein complex involved in the ATP-dependent degradation of ubiquitinated proteins. In the complex, rpn-6.2 is required for proteasome assembly. This Caenorhabditis briggsae protein is Probable 26S proteasome regulatory subunit rpn-6.2.